We begin with the raw amino-acid sequence, 422 residues long: Serine protease HTRA2, mitochondrial (422 aa).

Residues 1-17 (MALRGCHRLEVIFKRCI) constitute a mitochondrion transit peptide. A propeptide spanning residues 18-74 (ASPVLHSQAGNRRSSQLAIKGVDPNSNGNSGQYQQNGEHKEKGWRRLVRFFVPFSLG) is cleaved from the precursor. The tract at residues 33–55 (QLAIKGVDPNSNGNSGQYQQNGE) is disordered. Residues 42 to 53 (NSNGNSGQYQQN) are compositionally biased toward low complexity. A helical transmembrane segment spans residues 64–82 (LVRFFVPFSLGAAVSAAII). Short sequence motifs (IAP-binding) lie at residues 75 to 78 (AAVS) and 94 to 97 (SKMT). The tract at residues 139-302 (SNGSGFIIEQ…IPIDYVKVFL (164 aa)) is serine protease. Active-site charge relay system residues include His157, Asp189, and Ser266. In terms of domain architecture, PDZ spans 325 to 410 (MGITMLTLTP…TLDIVILRGV (86 aa)).

The protein belongs to the peptidase S1C family. Interacts with th/DIAP1 (via BIR 2 domain).

It localises to the mitochondrion intermembrane space. The protein localises to the mitochondrion membrane. The enzyme catalyses Cleavage of non-polar aliphatic amino-acids at the P1 position, with a preference for Val, Ile and Met. At the P2 and P3 positions, Arg is selected most strongly with a secondary preference for other hydrophilic residues.. Functionally, serine protease that shows proteolytic activity against a non-specific substrate beta-casein. Promotes or induces cell death either by direct binding to and inhibition of BIRC proteins (also called inhibitor of apoptosis proteins, IAPs), leading to an increase in caspase activity, or by a BIRC inhibition-independent, caspase-independent and serine protease activity-dependent mechanism. Can antagonize antiapoptotic activity of th/Diap1 by directly inducing the degradation of th/Diap1. In Drosophila simulans (Fruit fly), this protein is Serine protease HTRA2, mitochondrial.